Here is a 290-residue protein sequence, read N- to C-terminus: Elongation factor Ts (290 aa).

The involved in Mg(2+) ion dislocation from EF-Tu stretch occupies residues 81 to 84 (TDFV).

Belongs to the EF-Ts family.

The protein localises to the cytoplasm. Functionally, associates with the EF-Tu.GDP complex and induces the exchange of GDP to GTP. It remains bound to the aminoacyl-tRNA.EF-Tu.GTP complex up to the GTP hydrolysis stage on the ribosome. This Saccharophagus degradans (strain 2-40 / ATCC 43961 / DSM 17024) protein is Elongation factor Ts.